We begin with the raw amino-acid sequence, 119 residues long: Ribonuclease P protein component (119 aa).

The segment at 1–20 (MLPAQHRMTRSTEFGATVSK) is disordered.

Belongs to the RnpA family. In terms of assembly, consists of a catalytic RNA component (M1 or rnpB) and a protein subunit.

The enzyme catalyses Endonucleolytic cleavage of RNA, removing 5'-extranucleotides from tRNA precursor.. Its function is as follows. RNaseP catalyzes the removal of the 5'-leader sequence from pre-tRNA to produce the mature 5'-terminus. It can also cleave other RNA substrates such as 4.5S RNA. The protein component plays an auxiliary but essential role in vivo by binding to the 5'-leader sequence and broadening the substrate specificity of the ribozyme. The sequence is that of Ribonuclease P protein component from Mycolicibacterium vanbaalenii (strain DSM 7251 / JCM 13017 / BCRC 16820 / KCTC 9966 / NRRL B-24157 / PYR-1) (Mycobacterium vanbaalenii).